The primary structure comprises 356 residues: Pavine N-methyltransferase (356 aa).

Residues phenylalanine 96, serine 97, glycine 135, asparagine 159, glutamine 163, aspartate 185, valine 186, and valine 201 each contribute to the S-adenosyl-L-homocysteine site. Phenylalanine 96, serine 97, glycine 135, asparagine 159, glutamine 163, aspartate 185, valine 186, and valine 201 together coordinate S-adenosyl-L-methionine. Glutamate 205 contributes to the (S)-tetrahydropapaverine binding site. Cysteine 331 is a catalytic residue.

It belongs to the CFA/CMAS family. As to quaternary structure, homodimer.

The protein localises to the cytoplasm. It catalyses the reaction (+-)-pavine + S-adenosyl-L-methionine = N-methylpavine + S-adenosyl-L-homocysteine + H(+). The catalysed reaction is (S)-reticuline + S-adenosyl-L-methionine = (S)-tembetarine + S-adenosyl-L-homocysteine + H(+). It carries out the reaction (S)-stylopine + S-adenosyl-L-methionine = (S)-cis-N-methylstylopine + S-adenosyl-L-homocysteine. The enzyme catalyses (S)-scoulerine + S-adenosyl-L-methionine = (S)-cis-N-methylscoulerine + S-adenosyl-L-homocysteine. It catalyses the reaction (S)-tetrahydropapaverine + S-adenosyl-L-methionine = (S)-N-methyltetrahydropapaverine + S-adenosyl-L-homocysteine + H(+). The catalysed reaction is (S)-tetrahydropalmatine + S-adenosyl-L-methionine = (S)-cis-N-methyltetrahydropalmatine + S-adenosyl-L-homocysteine. It participates in alkaloid biosynthesis. With respect to regulation, in the presence of a racemic mixture of tetrahydropapaverine (THP), one molecule of (S)-THP binds in a productive mode, while one molecule of (R)-THP is bound next to it in a non-productive mode. The (R)-THP seems to inhibit the release of products from the enzyme when higher concentrations of the racemic substrate are added to the reaction. Functionally, N-methyltransferase with a substrate preference for (+-)-pavine and (S)-reticuline, but also active with the protoberberines scoulerine and stylopine and, to a lesser extent, tetrahydropapaverine (THP) and tetrahydropalmatine. Is not active on (R)-reticuline, cryptopine, glaucine, codeine, canadaline, noscapine and berbamine. In Thalictrum flavum subsp. glaucum (Yellow meadow rue), this protein is Pavine N-methyltransferase.